Consider the following 184-residue polypeptide: Oligoribonuclease (184 aa).

An Exonuclease domain is found at 8–171; the sequence is LIWIDLEMTG…DDIRESIAEL (164 aa). Tyrosine 129 is a catalytic residue.

This sequence belongs to the oligoribonuclease family.

Its subcellular location is the cytoplasm. 3'-to-5' exoribonuclease specific for small oligoribonucleotides. The chain is Oligoribonuclease from Pasteurella multocida (strain Pm70).